The chain runs to 89 residues: uncharacterized protein (89 aa).

Met-1 is a topological domain (cytoplasmic). Residues Leu-2–Leu-22 form a helical membrane-spanning segment. Over Met-23–Gly-89 the chain is Extracellular.

The protein resides in the host membrane. This is an uncharacterized protein from Sulfolobus islandicus filamentous virus (isolate Iceland/Hveragerdi) (SIFV).